We begin with the raw amino-acid sequence, 238 residues long: Pyridoxine 5'-phosphate synthase (238 aa).

N7 serves as a coordination point for 3-amino-2-oxopropyl phosphate. 1-deoxy-D-xylulose 5-phosphate is bound at residue D9–H10. Residue R18 participates in 3-amino-2-oxopropyl phosphate binding. The active-site Proton acceptor is H43. Positions 45 and 50 each coordinate 1-deoxy-D-xylulose 5-phosphate. The active-site Proton acceptor is the E70. T100 contributes to the 1-deoxy-D-xylulose 5-phosphate binding site. H191 acts as the Proton donor in catalysis. 3-amino-2-oxopropyl phosphate contacts are provided by residues G192 and G213–H214.

The protein belongs to the PNP synthase family. As to quaternary structure, homooctamer; tetramer of dimers.

The protein localises to the cytoplasm. It carries out the reaction 3-amino-2-oxopropyl phosphate + 1-deoxy-D-xylulose 5-phosphate = pyridoxine 5'-phosphate + phosphate + 2 H2O + H(+). The protein operates within cofactor biosynthesis; pyridoxine 5'-phosphate biosynthesis; pyridoxine 5'-phosphate from D-erythrose 4-phosphate: step 5/5. Functionally, catalyzes the complicated ring closure reaction between the two acyclic compounds 1-deoxy-D-xylulose-5-phosphate (DXP) and 3-amino-2-oxopropyl phosphate (1-amino-acetone-3-phosphate or AAP) to form pyridoxine 5'-phosphate (PNP) and inorganic phosphate. The protein is Pyridoxine 5'-phosphate synthase of Thermosynechococcus vestitus (strain NIES-2133 / IAM M-273 / BP-1).